The following is a 216-amino-acid chain: Urease operon 23 kDa accessory protein (216 aa).

In terms of biological role, involved in the expression of hydrogenase activity. May be a regulatory gene affecting the expression of the hydrogenase operon or could be involved in the process of nickel incorporation into the hydrogenase apoenzyme. This is Urease operon 23 kDa accessory protein from Rhizobium meliloti (strain 1021) (Ensifer meliloti).